Here is a 154-residue protein sequence, read N- to C-terminus: 3-hydroxyacyl-[acyl-carrier-protein] dehydratase FabZ (154 aa).

His54 is an active-site residue.

Belongs to the thioester dehydratase family. FabZ subfamily.

It localises to the cytoplasm. The catalysed reaction is a (3R)-hydroxyacyl-[ACP] = a (2E)-enoyl-[ACP] + H2O. Functionally, involved in unsaturated fatty acids biosynthesis. Catalyzes the dehydration of short chain beta-hydroxyacyl-ACPs and long chain saturated and unsaturated beta-hydroxyacyl-ACPs. The sequence is that of 3-hydroxyacyl-[acyl-carrier-protein] dehydratase FabZ from Chlamydia caviae (strain ATCC VR-813 / DSM 19441 / 03DC25 / GPIC) (Chlamydophila caviae).